The following is a 478-amino-acid chain: Crt homolog 3 (478 aa).

Residues 1–30 (MGSDERKPLLSINDGDDDFNHQDVSTKTPP) are disordered. At 1-52 (MGSDERKPLLSINDGDDDFNHQDVSTKTPPIKKESLSNKFKSFLKKSMTKET) the chain is on the cytoplasmic side. A helical membrane pass occupies residues 53 to 73 (LPILIYVLLYIISGVINVVLL). Residues 74–83 (KKLMIKFVNY) are Vacuolar-facing. The helical transmembrane segment at 84–104 (GFFLSQITNYGYLPIFLVAMW) threads the bilayer. Over 105–124 (YKMYCTSDVPKETRNFPQYK) the chain is Cytoplasmic. The helical transmembrane segment at 125–145 (FVIMGLLDAINGFFVVIGGVS) threads the bilayer. Over 146-149 (TSGP) the chain is Vacuolar. The chain crosses the membrane as a helical span at residues 150 to 170 (LQQLLNQAIIPFTMIASFIFL). Topologically, residues 171–178 (RERYSLFQ) are cytoplasmic. A helical membrane pass occupies residues 179–199 (LGGAAVILGGVIVSLIPSLVG). The Vacuolar segment spans residues 200–205 (GSSGGN). Residues 206–226 (ILFYNFFYLISVIPGALSNVY) traverse the membrane as a helical segment. The Cytoplasmic segment spans residues 227-237 (KDIAFQSIDMD). The helical transmembrane segment at 238-258 (VWYLQFWDCLYQSLFGSILFP) threads the bilayer. Over 259–322 (VNNWLPPPAT…FVCDDCHNTW (64 aa)) the chain is Vacuolar. N-linked (GlcNAc...) asparagine glycosylation is present at Asn296. Residues 323-343 (IIVLIYMTVNIAYNIFILLVL) form a helical membrane-spanning segment. Residues 344–352 (KHAGATVYS) lie on the Cytoplasmic side of the membrane. A helical transmembrane segment spans residues 353 to 373 (IANTVILPLTNIFFSIHFIMG). At 374 to 376 (AAT) the chain is on the vacuolar side. The chain crosses the membrane as a helical span at residues 377–397 (TPFSALSVAGLLLILFGLGGY). Residues 398-478 (RIGSMIKKPP…RYRATNIINN (81 aa)) lie on the Cytoplasmic side of the membrane. The tract at residues 404-446 (KKPPPDSKKDSEQQGGEGGAGDGDSSDNKNNLGDSAEIPQQIQ) is disordered. A compositionally biased stretch (basic and acidic residues) spans 406-415 (PPPDSKKDSE).

This sequence belongs to the CRT-like transporter family.

The protein localises to the vacuole membrane. Nutrient transporter. Involved in maintaining the osmotic homeostasis of the digestive vacuole. The sequence is that of Crt homolog 3 (crtp3) from Dictyostelium discoideum (Social amoeba).